The chain runs to 364 residues: MKKAILMMTFGSPEEITFEGVADFFTNIRRGVRPQDHEIQTLYDNYVRIGGTPLQKITRQEVALVEARLGNEYSVYFANKFSSPFIPDVIGQMEADGIEQCICLILEPHYSFYSVMGYEKFLESKQIQFLVIKDWYQEEALLNYWVDEIAKILKEEVKQDSCKVIFSAHSVPIFALDFGDPYIDQIFENSKLVAEKLGLSSEQYTNTWQSESDIGIPWIKPDVLEYLREQTEHPDHYIFVPISFISEHIEVLFDNDVECYDLCQEFGVNYHRPPMPNTDSRLIDALVNTVRVNENQEFKEFLPEEETFDELVPSDETKNILAESEDLQMPEFVKKLIEKKGRENVKMPYLIKKMFEKAGKLPKE.

Fe-coproporphyrin III contacts are provided by Arg-29 and Tyr-118. Residues His-169 and Glu-250 each contribute to the Fe(2+) site.

Belongs to the ferrochelatase family.

The protein resides in the cytoplasm. It catalyses the reaction Fe-coproporphyrin III + 2 H(+) = coproporphyrin III + Fe(2+). The protein operates within porphyrin-containing compound metabolism; protoheme biosynthesis. Its function is as follows. Involved in coproporphyrin-dependent heme b biosynthesis. Catalyzes the insertion of ferrous iron into coproporphyrin III to form Fe-coproporphyrin III. This is Coproporphyrin III ferrochelatase from Streptococcus pneumoniae (strain Hungary19A-6).